We begin with the raw amino-acid sequence, 498 residues long: Myotilin (498 aa).

Disordered regions lie at residues 1–46 (MFNY…QPRQ), 64–151 (MSSS…HEIQ), and 202–241 (QDDS…NDQD). Arginine 20 is modified (omega-N-methylarginine). The span at 29-43 (SSFSSQTKQSSIIIQ) shows a compositional bias: low complexity. Polar residues predominate over residues 77–138 (AGSNPGQRVT…INAKPSQTAN (62 aa)). A necessary for interaction with ACTN1 region spans residues 79–150 (SNPGQRVTTT…PIPRTPDHEI (72 aa)). Residues 202 to 212 (QDDSGAQDSQQ) show a composition bias toward low complexity. A necessary for interaction with FLNC region spans residues 215–493 (SEHARLQVPT…QRLAAQSGLY (279 aa)). Positions 215-498 (SEHARLQVPT…QSGLYESEEL (284 aa)) are necessary for interaction with ACTA1. Residues 222–235 (VPTSQVRSRSTSRG) are compositionally biased toward polar residues. Ig-like C2-type domains follow at residues 250–335 (PRFI…ATFT) and 349–441 (PMFI…LDVT).

This sequence belongs to the myotilin/palladin family. In terms of assembly, homodimer. Interacts with ACTA1, ACTN1, FLNA, FLNB, FLNC and MYOZ2. Interacts with the C-terminal region of MYOZ1. Expressed in skeletal muscle (at protein level). Expressed in skeletal muscle, heart, bone marrow and thyroid gland.

The protein resides in the cell membrane. Its subcellular location is the sarcolemma. The protein localises to the cytoplasm. It localises to the cytoskeleton. It is found in the myofibril. The protein resides in the sarcomere. Its subcellular location is the z line. Functionally, component of a complex of multiple actin cross-linking proteins. Involved in the control of myofibril assembly and stability at the Z lines in muscle cells. This chain is Myotilin (MYOT), found in Homo sapiens (Human).